The sequence spans 74 residues: uncharacterized protein (74 aa).

Basic and acidic residues-rich tracts occupy residues 1–13 (MKKQ…HQLK) and 20–60 (IKAK…KSFE). Residues 1-74 (MKKQKSIDKH…ESQMDWHQYK (74 aa)) are disordered. Positions 64 to 74 (NESQMDWHQYK) are enriched in polar residues.

This is an uncharacterized protein from Bacillus subtilis (strain 168).